Reading from the N-terminus, the 137-residue chain is Ribosome-binding factor A (137 aa).

The segment at 114–137 (QLIDEARAEDRELRPEDDETGNNE) is disordered. Basic and acidic residues predominate over residues 117-127 (DEARAEDRELR). The segment covering 128–137 (PEDDETGNNE) has biased composition (acidic residues).

It belongs to the RbfA family. In terms of assembly, monomer. Binds 30S ribosomal subunits, but not 50S ribosomal subunits or 70S ribosomes.

The protein localises to the cytoplasm. Its function is as follows. One of several proteins that assist in the late maturation steps of the functional core of the 30S ribosomal subunit. Associates with free 30S ribosomal subunits (but not with 30S subunits that are part of 70S ribosomes or polysomes). Required for efficient processing of 16S rRNA. May interact with the 5'-terminal helix region of 16S rRNA. In Alcanivorax borkumensis (strain ATCC 700651 / DSM 11573 / NCIMB 13689 / SK2), this protein is Ribosome-binding factor A.